The chain runs to 238 residues: Ribitol-5-phosphate cytidylyltransferase 1 (238 aa).

Residues 7-10 and 81-87 each bind CTP; these read LAGG and GSDRNDT.

Belongs to the IspD/TarI cytidylyltransferase family. TarI subfamily.

It catalyses the reaction D-ribitol 5-phosphate + CTP + H(+) = CDP-L-ribitol + diphosphate. It functions in the pathway cell wall biogenesis; poly(ribitol phosphate) teichoic acid biosynthesis. In terms of biological role, catalyzes the transfer of the cytidylyl group of CTP to D-ribitol 5-phosphate. The polypeptide is Ribitol-5-phosphate cytidylyltransferase 1 (Staphylococcus aureus (strain bovine RF122 / ET3-1)).